The sequence spans 108 residues: Putative septation protein SpoVG (108 aa).

The disordered stretch occupies residues 84 to 108; sequence FEKQSSVETEPVTEENMETAENENE. Positions 94–108 are enriched in acidic residues; it reads PVTEENMETAENENE.

Belongs to the SpoVG family.

In terms of biological role, could be involved in septation. This is Putative septation protein SpoVG from Finegoldia magna (strain ATCC 29328 / DSM 20472 / WAL 2508) (Peptostreptococcus magnus).